We begin with the raw amino-acid sequence, 360 residues long: DNA replication and repair protein RecF (360 aa).

An ATP-binding site is contributed by 30-37 (GQNGSGKT).

This sequence belongs to the RecF family.

Its subcellular location is the cytoplasm. In terms of biological role, the RecF protein is involved in DNA metabolism; it is required for DNA replication and normal SOS inducibility. RecF binds preferentially to single-stranded, linear DNA. It also seems to bind ATP. This Shewanella baltica (strain OS185) protein is DNA replication and repair protein RecF.